An 89-amino-acid polypeptide reads, in one-letter code: Phasin PhaP (89 aa).

2 helix regions span residues 3-26 (TQFF…TWME) and 39-83 (DTFE…ALRQ).

As to quaternary structure, homotetramer.

The protein localises to the cellular thylakoid membrane. Its subcellular location is the cytoplasm. It functions in the pathway biopolymer metabolism; poly-(R)-3-hydroxybutanoate biosynthesis. In terms of biological role, a phasin, it attaches to the polyhydroxybutyrate (PHB) granule surface regulating the number and size of PHB granules within a cell. It probably also acts as a regulator affecting the biosynthetic activity of PHB synthase in vivo. The chain is Phasin PhaP from Synechocystis sp. (strain ATCC 27184 / PCC 6803 / Kazusa).